A 305-amino-acid chain; its full sequence is D-alanine--D-alanine ligase (305 aa).

The region spanning 99-300 is the ATP-grasp domain; sequence KLFFEKAGIR…YEEMIQTFVN (202 aa). Residue 126 to 181 coordinates ATP; it reads NFTGTYPVVVKPNQEGSTIGLTVAETEEELLQGIEEAFRHDDTILIEEFIAGTEVT.

It belongs to the D-alanine--D-alanine ligase family.

The protein resides in the cytoplasm. It catalyses the reaction 2 D-alanine + ATP = D-alanyl-D-alanine + ADP + phosphate + H(+). It participates in cell wall biogenesis; peptidoglycan biosynthesis. Functionally, cell wall formation. The polypeptide is D-alanine--D-alanine ligase (Halalkalibacterium halodurans (strain ATCC BAA-125 / DSM 18197 / FERM 7344 / JCM 9153 / C-125) (Bacillus halodurans)).